Consider the following 342-residue polypeptide: MDLTAALRRITENQDLSPDEMTAVFRTIMTGGATPAQIGGFLIGMRLKGETVQEMAAAASVMRELAERVDVGDDFHRLVDTCGTGGDARGTLNVSTAAAFVTAAGGIPVAKHGNRSVSGRSGSADLLEACGATLELSSEAVAECIRRVNVGFLFAPLHHSAMKHAVGPRKELGVRTLFNLVGPLSNPAGARRQLLGVFGQEWVRPVAEVLQALGSDHVLVVHAEDGLDEISIAAPTRIAELRNGQIEEYTVTPEDLGLRSAPLNEVTISGTKDSLAMIRAAFSGERIAAMELIAANAGAALYVGGEAPDLRRGVERARELMTSGAAAQTLERFVATTKELAQ.

Residues Gly-83, 86 to 87 (GD), Thr-91, 93 to 96 (NVST), 111 to 119 (KHGNRSVSG), and Ser-123 each bind 5-phospho-alpha-D-ribose 1-diphosphate. Position 83 (Gly-83) interacts with anthranilate. Ser-95 serves as a coordination point for Mg(2+). Position 114 (Asn-114) interacts with anthranilate. Arg-169 serves as a coordination point for anthranilate. Positions 228 and 229 each coordinate Mg(2+).

It belongs to the anthranilate phosphoribosyltransferase family. In terms of assembly, homodimer. The cofactor is Mg(2+).

It carries out the reaction N-(5-phospho-beta-D-ribosyl)anthranilate + diphosphate = 5-phospho-alpha-D-ribose 1-diphosphate + anthranilate. It participates in amino-acid biosynthesis; L-tryptophan biosynthesis; L-tryptophan from chorismate: step 2/5. Catalyzes the transfer of the phosphoribosyl group of 5-phosphorylribose-1-pyrophosphate (PRPP) to anthranilate to yield N-(5'-phosphoribosyl)-anthranilate (PRA). The sequence is that of Anthranilate phosphoribosyltransferase from Halorhodospira halophila (strain DSM 244 / SL1) (Ectothiorhodospira halophila (strain DSM 244 / SL1)).